Here is a 921-residue protein sequence, read N- to C-terminus: Guanylate kinase-associated protein mars (921 aa).

A Phosphoserine modification is found at serine 49. The residue at position 51 (threonine 51) is a Phosphothreonine. 2 positions are modified to phosphoserine: serine 76 and serine 170. Tyrosine 172 carries the post-translational modification Phosphotyrosine. Disordered stretches follow at residues 179 to 208 (GKGKAAEPIKPSIPKPTSAAAPPSSNTVAA) and 273 to 325 (RPTP…PLGN). Low complexity-rich tracts occupy residues 193–208 (KPTSAAAPPSSNTVAA) and 273–285 (RPTPATVTKAKTP). Serine 444 carries the post-translational modification Phosphoserine. The interval 500-531 (QTTVKEDTGDSTLVPEGTKTPPRRESNGMPNY) is disordered. Position 519 is a phosphothreonine (threonine 519). Serine 554 carries the post-translational modification Phosphoserine. 2 disordered regions span residues 641–660 (AGATGKNSQPNDGSEDSKPV) and 743–763 (TKVEEPTLEDGLPATSSRHSS). Phosphoserine is present on residues serine 785 and serine 792. Disordered regions lie at residues 809-833 (QNAAKTPPPKPRTSILKTPGTTKRQ) and 861-921 (ETVG…SEFM). Threonine 826 is subject to Phosphothreonine. The segment covering 878–907 (EASTESGSLEQNPGRDSNQENEATPRTYTL) has biased composition (polar residues).

This sequence belongs to the SAPAP family. As to expression, expressed in the central nervous system and at different stages of gametogenesis. In embryos, it is expressed in central nervous system and brain. In testis, it is strongly expressed in pre-meiotic germ cells, but is not found in somatic or post-meiotic cells.

The protein resides in the cell membrane. It is found in the nucleus. Its subcellular location is the nucleoplasm. It localises to the cytoplasm. The protein localises to the cytoskeleton. The protein resides in the spindle. Functionally, cell cycle regulator. In Drosophila melanogaster (Fruit fly), this protein is Guanylate kinase-associated protein mars (mars).